A 116-amino-acid polypeptide reads, in one-letter code: U16-barytoxin-Tl1a (116 aa).

Positions 1-20 are cleaved as a signal peptide; it reads MKTIIVFLSLLVLATKFGDA. Residues 21-74 constitute a propeptide that is removed on maturation; sequence KEGVNQKQKKEVTQNEFREEYLNEMAAMSLVQQLEAIERALFENEAGRNSRQKR. 3 cysteine pairs are disulfide-bonded: Cys75-Cys90, Cys82-Cys95, and Cys89-Cys110.

It belongs to the neurotoxin 14 (magi-1) family. 06 (ICK-Trit) subfamily. In terms of tissue distribution, expressed by the venom gland.

The protein resides in the secreted. In terms of biological role, ion channel inhibitor. The polypeptide is U16-barytoxin-Tl1a (Trittame loki (Brush-footed trapdoor spider)).